We begin with the raw amino-acid sequence, 569 residues long: MASEQSNPRLPRRPPYMAEKARATLKEAFPNTDDAIIRAVLAASGYKLEPAFNALLGLSDPQVAEEMEQAETSYAYDTAAHDDPVQRQLEEDERCARELANRYNSHRPERRRKTNNDRRNYPPQNRTAKPNDNDGDDYSFFEDDLPVIKDTFMRGFQSFKQRSMEWVENIASKFDGEEEDDDDEKYSAPSKIYPSPRRSTAATLESAYEERPPSLPRRKPSRPGTAITLPPYESDPHMLNEKDFERLRLESSSSPMMRRSSLNSNRRSVESSSSAAFVEGQSFILDSNGAIEVANSAFALDDSDLESAYNEELEMKKDTSKPTASTKEVVVEKKPDESRKQAARTLETVSEEQMGSSNAKSKVLTSEPKDSTSVEAEKTETDEPAVGKGASDVSDTAEISEKTEAKNADSEANLEEKSDVGEEKESKDENNKASLHKDVEEKDTKITNEDTGKTETDVKAKETDSIEANDKDEKTDSKETEDKVEETESKEADVKAKETDSIEVDDKEEKTDSKETADKVEQTDSKDTNEKPAKDDNKEANEKAEKVDSKDVKEKIEEAADLQNSGKET.

The region spanning 17 to 60 (MAEKARATLKEAFPNTDDAIIRAVLAASGYKLEPAFNALLGLSD) is the CUE domain. Disordered regions lie at residues 67 to 139 (MEQA…DDYS), 175 to 275 (DGEE…SSSA), and 311 to 569 (EELE…GKET). A compositionally biased stretch (basic and acidic residues) spans 79–100 (AAHDDPVQRQLEEDERCARELA). Basic residues predominate over residues 104–113 (NSHRPERRRK). Basic and acidic residues predominate over residues 234 to 249 (SDPHMLNEKDFERLRL). Over residues 250 to 274 (ESSSSPMMRRSSLNSNRRSVESSSS) the composition is skewed to low complexity. Residues 329–340 (VVVEKKPDESRK) show a composition bias toward basic and acidic residues. Polar residues predominate over residues 347-364 (ETVSEEQMGSSNAKSKVL). Basic and acidic residues-rich tracts occupy residues 367–381 (EPKD…KTET), 399–500 (ISEK…KETD), and 507–558 (KEEK…KIEE).

The protein resides in the cytoplasm. The polypeptide is CUE domain-containing protein 5 (Schizosaccharomyces pombe (strain 972 / ATCC 24843) (Fission yeast)).